Reading from the N-terminus, the 380-residue chain is Succinate--CoA ligase [ADP-forming] subunit beta (380 aa).

Positions 9–236 constitute an ATP-grasp domain; the sequence is KGVFADAGIP…EAAGDELEAK (228 aa). ATP contacts are provided by residues Lys45, 52–54, Glu91, Val94, and Glu99; that span reads GRG. Residues Asn191 and Asp205 each contribute to the Mg(2+) site. Substrate-binding positions include Asn256 and 313-315; that span reads GIT.

This sequence belongs to the succinate/malate CoA ligase beta subunit family. As to quaternary structure, heterotetramer of two alpha and two beta subunits. It depends on Mg(2+) as a cofactor.

The enzyme catalyses succinate + ATP + CoA = succinyl-CoA + ADP + phosphate. It catalyses the reaction GTP + succinate + CoA = succinyl-CoA + GDP + phosphate. The protein operates within carbohydrate metabolism; tricarboxylic acid cycle; succinate from succinyl-CoA (ligase route): step 1/1. Functionally, succinyl-CoA synthetase functions in the citric acid cycle (TCA), coupling the hydrolysis of succinyl-CoA to the synthesis of either ATP or GTP and thus represents the only step of substrate-level phosphorylation in the TCA. The beta subunit provides nucleotide specificity of the enzyme and binds the substrate succinate, while the binding sites for coenzyme A and phosphate are found in the alpha subunit. This chain is Succinate--CoA ligase [ADP-forming] subunit beta, found in Natronomonas pharaonis (strain ATCC 35678 / DSM 2160 / CIP 103997 / JCM 8858 / NBRC 14720 / NCIMB 2260 / Gabara) (Halobacterium pharaonis).